A 497-amino-acid polypeptide reads, in one-letter code: Glycerol kinase (497 aa).

Threonine 12 contacts ADP. Positions 12, 13, and 14 each coordinate ATP. A sn-glycerol 3-phosphate-binding site is contributed by threonine 12. Arginine 16 is an ADP binding site. Sn-glycerol 3-phosphate-binding residues include arginine 82, glutamate 83, tyrosine 133, and aspartate 243. The glycerol site is built by arginine 82, glutamate 83, tyrosine 133, aspartate 243, and glutamine 244. Residues threonine 265 and glycine 308 each coordinate ADP. ATP-binding residues include threonine 265, glycine 308, glutamine 312, and glycine 409. Residue glycine 409 coordinates ADP.

It belongs to the FGGY kinase family.

The enzyme catalyses glycerol + ATP = sn-glycerol 3-phosphate + ADP + H(+). It functions in the pathway polyol metabolism; glycerol degradation via glycerol kinase pathway; sn-glycerol 3-phosphate from glycerol: step 1/1. With respect to regulation, inhibited by fructose 1,6-bisphosphate (FBP). Functionally, key enzyme in the regulation of glycerol uptake and metabolism. Catalyzes the phosphorylation of glycerol to yield sn-glycerol 3-phosphate. This Dichelobacter nodosus (strain VCS1703A) protein is Glycerol kinase.